A 589-amino-acid polypeptide reads, in one-letter code: Phenylalanine--tRNA ligase beta subunit (589 aa).

The B5 domain occupies 290 to 368 (LNPTCFKADI…IAYGYDNLKH (79 aa)). 4 residues coordinate Mg(2+): Asp346, Asp352, Glu355, and Asp356.

It belongs to the phenylalanyl-tRNA synthetase beta subunit family. Type 2 subfamily. Tetramer of two alpha and two beta subunits. Requires Mg(2+) as cofactor.

Its subcellular location is the cytoplasm. The protein localises to the nucleus. The enzyme catalyses tRNA(Phe) + L-phenylalanine + ATP = L-phenylalanyl-tRNA(Phe) + AMP + diphosphate + H(+). This Schizosaccharomyces pombe (strain 972 / ATCC 24843) (Fission yeast) protein is Phenylalanine--tRNA ligase beta subunit (frs1).